The primary structure comprises 143 residues: Ribosome-binding factor A (143 aa).

Residues 1–20 form a disordered region; sequence MRFMGKNKFHTGPGPSQRQL.

It belongs to the RbfA family. As to quaternary structure, monomer. Binds 30S ribosomal subunits, but not 50S ribosomal subunits or 70S ribosomes.

The protein localises to the cytoplasm. One of several proteins that assist in the late maturation steps of the functional core of the 30S ribosomal subunit. Associates with free 30S ribosomal subunits (but not with 30S subunits that are part of 70S ribosomes or polysomes). Required for efficient processing of 16S rRNA. May interact with the 5'-terminal helix region of 16S rRNA. This is Ribosome-binding factor A from Roseobacter denitrificans (strain ATCC 33942 / OCh 114) (Erythrobacter sp. (strain OCh 114)).